A 64-amino-acid chain; its full sequence is MSESLTKVILSVITTNRNRVAGGAPVFFCNDQKEMELFAKNLEAILDGIAHRIGDDVYLIVKHF.

This is an uncharacterized protein from Bacillus subtilis (strain 168).